The chain runs to 631 residues: MKTYESNEYDVIVVGAGHAGVEAALAAARMGEKTLLLTINLDMVAFMPCNPSVGGPAKGTVVREIDALGGEMGKNIDATYIQMRMLNTGKGPAVRALRAQADKWQYHEHMKDTIENEPNLTLRQAVADELIVEDGACKGLITNTGAKYHAKSVVLTTGTAARGKIIIGELTYSSGPNNSLPSIKLPENLEKLGFKLRRFKTGTPPRVDGNTVDYSKTQEEPGDKEPRHFSYTSKDSDYLKDQMSCYMTYTNTVTHDIIRANLDRAPMFSGVIKGVGPRYCPSIEDKVVRFADKDRHQIFLEPEGRNTKEIYVGDFSTSMPEEVQLKMLHSVAGLEKAELMRPGYAIEYDVIEPWQLKHTLETKNIKHLFTAGQMNGTSGYEEAAGQGLIAGINAALSAQNKPGFTLQRDEAYIGVLIDDLVTKGTNEPYRLLTSRAEYRLLLRHDNADLRLTEKGHELGLISEERYAKFEAKKQAISRAMAAIKKVTIHPTDEVQEYLASVKQDRLNAGVSGADFLKRPRVTFDAVEKLSGQTLATDRYVKEQVEIALKYEGYIKKEKTLVDRLHRLESKKIPVDIDYNAIPSLATEARQKFEKIRPESIAQAERISGVNPADLAILTAYIQQGRIAKIKK.

Glycine 15 to glycine 20 is an FAD binding site. The tract at residues threonine 203–threonine 232 is disordered. Positions lysine 216–threonine 232 are enriched in basic and acidic residues. Glycine 276–phenylalanine 290 is a binding site for NAD(+).

It belongs to the MnmG family. As to quaternary structure, homodimer. Heterotetramer of two MnmE and two MnmG subunits. Requires FAD as cofactor.

It is found in the cytoplasm. Functionally, NAD-binding protein involved in the addition of a carboxymethylaminomethyl (cmnm) group at the wobble position (U34) of certain tRNAs, forming tRNA-cmnm(5)s(2)U34. In Lactobacillus gasseri (strain ATCC 33323 / DSM 20243 / BCRC 14619 / CIP 102991 / JCM 1131 / KCTC 3163 / NCIMB 11718 / NCTC 13722 / AM63), this protein is tRNA uridine 5-carboxymethylaminomethyl modification enzyme MnmG.